A 140-amino-acid polypeptide reads, in one-letter code: Immunity protein RhsIC (140 aa).

Its function is as follows. Putative immunity protein component of a toxin-immunity protein module, which may function as a cellular contact-dependent growth inhibition (CDI) system. Blocks the toxic effects of expression of the C-terminus (residues 1519-1658) of cognate toxin RhsC in E.coli. This Dickeya dadantii (strain 3937) (Erwinia chrysanthemi (strain 3937)) protein is Immunity protein RhsIC (rhsIC).